Here is a 73-residue protein sequence, read N- to C-terminus: MPNSLFKKKLSPIKPGDPIDYKDVETLKKFITERGKILPRRLTGLTAKQQRDLTTAVKRARIIALLPFVNPEG.

It belongs to the bacterial ribosomal protein bS18 family. In terms of assembly, part of the 30S ribosomal subunit. Forms a tight heterodimer with protein bS6.

Its function is as follows. Binds as a heterodimer with protein bS6 to the central domain of the 16S rRNA, where it helps stabilize the platform of the 30S subunit. This Prochlorococcus marinus (strain SARG / CCMP1375 / SS120) protein is Small ribosomal subunit protein bS18.